We begin with the raw amino-acid sequence, 570 residues long: Methionine--tRNA ligase (570 aa).

Positions 14–24 match the 'HIGH' region motif; it reads PYINGIKHLGN. The Zn(2+) site is built by Cys-146, Cys-149, Cys-159, and Cys-162. Residues 347 to 351 carry the 'KMSKS' region motif; the sequence is QFSTS. Thr-350 serves as a coordination point for ATP.

Belongs to the class-I aminoacyl-tRNA synthetase family. MetG type 1 subfamily. In terms of assembly, monomer. Requires Zn(2+) as cofactor.

Its subcellular location is the cytoplasm. The enzyme catalyses tRNA(Met) + L-methionine + ATP = L-methionyl-tRNA(Met) + AMP + diphosphate. In terms of biological role, is required not only for elongation of protein synthesis but also for the initiation of all mRNA translation through initiator tRNA(fMet) aminoacylation. This is Methionine--tRNA ligase from Jannaschia sp. (strain CCS1).